The following is a 159-amino-acid chain: ATP synthase subunit b 2 (159 aa).

The chain crosses the membrane as a helical span at residues 1 to 21 (MDATFWAFIALVIFVVIVVYM).

It belongs to the ATPase B chain family. As to quaternary structure, F-type ATPases have 2 components, F(1) - the catalytic core - and F(0) - the membrane proton channel. F(1) has five subunits: alpha(3), beta(3), gamma(1), delta(1), epsilon(1). F(0) has three main subunits: a(1), b(2) and c(10-14). The alpha and beta chains form an alternating ring which encloses part of the gamma chain. F(1) is attached to F(0) by a central stalk formed by the gamma and epsilon chains, while a peripheral stalk is formed by the delta and b chains.

It localises to the cell inner membrane. Its function is as follows. F(1)F(0) ATP synthase produces ATP from ADP in the presence of a proton or sodium gradient. F-type ATPases consist of two structural domains, F(1) containing the extramembraneous catalytic core and F(0) containing the membrane proton channel, linked together by a central stalk and a peripheral stalk. During catalysis, ATP synthesis in the catalytic domain of F(1) is coupled via a rotary mechanism of the central stalk subunits to proton translocation. Component of the F(0) channel, it forms part of the peripheral stalk, linking F(1) to F(0). The protein is ATP synthase subunit b 2 of Brucella canis (strain ATCC 23365 / NCTC 10854 / RM-666).